Reading from the N-terminus, the 813-residue chain is DNA gyrase subunit A (813 aa).

The region spanning 38 to 504 (LPDVRDGLKP…EIEYLDVEDF (467 aa)) is the Topo IIA-type catalytic domain. Tyrosine 126 serves as the catalytic O-(5'-phospho-DNA)-tyrosine intermediate. Positions 531–537 (QNRGGKG) match the GyrA-box motif.

This sequence belongs to the type II topoisomerase GyrA/ParC subunit family. In terms of assembly, heterotetramer, composed of two GyrA and two GyrB chains. In the heterotetramer, GyrA contains the active site tyrosine that forms a transient covalent intermediate with DNA, while GyrB binds cofactors and catalyzes ATP hydrolysis.

The protein localises to the cytoplasm. The enzyme catalyses ATP-dependent breakage, passage and rejoining of double-stranded DNA.. Its function is as follows. A type II topoisomerase that negatively supercoils closed circular double-stranded (ds) DNA in an ATP-dependent manner to modulate DNA topology and maintain chromosomes in an underwound state. Negative supercoiling favors strand separation, and DNA replication, transcription, recombination and repair, all of which involve strand separation. Also able to catalyze the interconversion of other topological isomers of dsDNA rings, including catenanes and knotted rings. Type II topoisomerases break and join 2 DNA strands simultaneously in an ATP-dependent manner. This is DNA gyrase subunit A from Treponema pallidum (strain Nichols).